Here is a 140-residue protein sequence, read N- to C-terminus: Transmembrane protein 107 (140 aa).

Transmembrane regions (helical) follow at residues 7 to 27 (LVPS…TLFW) and 53 to 73 (LVAA…GFLS). Asn79 carries an N-linked (GlcNAc...) asparagine glycan. 2 consecutive transmembrane segments (helical) span residues 83–103 (SLIS…FIFE) and 113–133 (IFVF…VTVF).

Part of the tectonic-like complex (also named B9 complex). Interacts with TMEM237, TMEM231, MKS1 and TMEM216.

Its subcellular location is the membrane. The protein resides in the cell projection. It is found in the cilium. Functionally, plays a role in cilia formation and embryonic patterning. Requires for normal Sonic hedgehog (Shh) signaling in the neural tube and acts in combination with GLI2 and GLI3 to pattern ventral and intermediate neuronal cell types. During ciliogenesis regulates the ciliary transition zone localization of some MKS complex proteins. This chain is Transmembrane protein 107, found in Homo sapiens (Human).